Reading from the N-terminus, the 294-residue chain is Transcription repressor OFP14 (294 aa).

Over residues 49–60 (SFKHRRRSSKTR) the composition is skewed to basic residues. Disordered regions lie at residues 49–72 (SFKH…HQDS), 96–129 (DDQE…DDDD), and 141–185 (AVYD…SRST). Composition is skewed to basic and acidic residues over residues 61–72 (FSKEEPVYHQDS) and 96–117 (DDQE…RESS). Over residues 118–128 (SDDSDDDDDDD) the composition is skewed to acidic residues. Positions 164-185 (SSEGRPSMETTSTSSERQSRST) are enriched in low complexity. Residues 195–259 (VLRYTDEPQE…LSAFVDLIIA (65 aa)) form the OVATE domain.

Interacts with KNAT2 and KNAT3. In terms of tissue distribution, expressed in roots, rosette and cauline leaves, shoots, stems, flower buds and siliques.

It localises to the nucleus. Transcriptional repressor that may regulate multiple aspects of plant growth and development through the regulation of BEL1-LIKE (BLH) and KNOX TALE (KNAT) homeodomain transcription factors. This chain is Transcription repressor OFP14 (OFP14), found in Arabidopsis thaliana (Mouse-ear cress).